The following is a 232-amino-acid chain: MIDQKVIVALDYDNQADALAFVDRIDPASCRLKVGKEMFTLFGPDFVRELHKRGFSVFLDLKFHDIPNTCSKAVRAAAELGVWMVNVHASGGERMMTASREILEPYGKDRPLLIGVTVLTSMEQSDLAGIGLDVAPQEHVIRLATLTKNSGLDGVVCSAQESSLLKNELGKEFKLVTPGIRPLGSEQGDQRRIMTPLEAVQAGSDYLVIGRPITQAVDPAAVLQAINTSLTK.

Residues Asp11, Lys33, 60–69 (DLKFHDIPNT), Thr120, Arg181, Gln190, Gly210, and Arg211 contribute to the substrate site. Lys62 acts as the Proton donor in catalysis.

This sequence belongs to the OMP decarboxylase family. Type 1 subfamily. In terms of assembly, homodimer.

The catalysed reaction is orotidine 5'-phosphate + H(+) = UMP + CO2. The protein operates within pyrimidine metabolism; UMP biosynthesis via de novo pathway; UMP from orotate: step 2/2. Catalyzes the decarboxylation of orotidine 5'-monophosphate (OMP) to uridine 5'-monophosphate (UMP). The polypeptide is Orotidine 5'-phosphate decarboxylase (Vibrio vulnificus (strain CMCP6)).